Here is a 363-residue protein sequence, read N- to C-terminus: Crh-like protein 3 (363 aa).

The N-terminal stretch at 1 to 19 is a signal peptide; it reads MSLLYLVALFVASICSVTA. Residues cysteine 25 and cysteine 32 are joined by a disulfide bond. Positions 26–237 constitute a GH16 domain; the sequence is NPLTTTCPPD…YSKAPFTMVL (212 aa). Asparagine 41, asparagine 47, and asparagine 56 each carry an N-linked (GlcNAc...) asparagine glycan. The Nucleophile role is filled by glutamate 118. Glutamate 122 serves as the catalytic Proton donor. Glutamate 122 contacts chitin. N-linked (GlcNAc...) asparagine glycosylation is found at asparagine 127, asparagine 141, and asparagine 161. Chitin is bound by residues arginine 203, tryptophan 207, and threonine 218. 2 N-linked (GlcNAc...) asparagine glycosylation sites follow: asparagine 252 and asparagine 269. The chain crosses the membrane as a helical span at residues 298–318; that stretch reads VYIGAGCVGAALLAGFIFFFI.

It belongs to the glycosyl hydrolase 16 family. CRH1 subfamily. Post-translationally, the GPI-like anchor contains a phosphoceramide lipid group. The anchor position has not been determined.

It localises to the cell membrane. Its subcellular location is the secreted. The protein localises to the cell wall. The catalysed reaction is Random endo-hydrolysis of N-acetyl-beta-D-glucosaminide (1-&gt;4)-beta-linkages in chitin and chitodextrins.. Its function is as follows. Dual chitinase/transglycosylase that plays a role in cell wall architecture. Chitinase and transglycosylase activities are coupled. Required for the polysaccharide cross-linking at the septa and the cell wall. More specifically, transfers chitin to 1,6-beta-glucan in the cell wall. The sequence is that of Crh-like protein 3 from Aspergillus fumigatus (strain ATCC MYA-4609 / CBS 101355 / FGSC A1100 / Af293) (Neosartorya fumigata).